A 654-amino-acid chain; its full sequence is RING finger protein 112 (654 aa).

An RING-type zinc finger spans residues 80–121 (CSICLERLREPISLDCGHDFCIRCFSTHRIPGCELPCCPECR). Residues 154–654 (AVRAERLLLV…GDREPLLQEE (501 aa)) are interaction with ZBTB16. The GB1/RHD3-type G domain occupies 189–420 (DTPVCLLAVL…YILDVLSTAP (232 aa)). 340–341 (RD) is a binding site for GTP. The next 2 helical transmembrane spans lie at 570 to 590 (LAAVGGAVGAGLMGLAGGVVG) and 603 to 623 (GMVAAGAAVGATGAAVVGGGV).

This sequence belongs to the TRAFAC class dynamin-like GTPase superfamily. GB1/RHD3 GTPase family. GB1 subfamily. In terms of assembly, self-associates. Interacts with SP1 in an oxidative stress-regulated manner. Interacts with SIGMAR1 in an oxidative stress-regulated manner. Interacts with ZBTB16 (via C2H2-type zinc finger domains 1 and 2). Auto-ubiquitinated. As to expression, expressed in most of the brain areas, including cortex, striatum, hippocampus, thalamus, and cerebellum (at protein level). Expressed in lateral amygdaloid nucleus, and ventromedial hypothalamus. Also expressed strongly in the marginal zone of brain vesicles, optic stalk, and cartilage primordium.

The protein localises to the membrane. The protein resides in the cytoplasm. It is found in the nucleus. Its subcellular location is the nuclear body. It localises to the nucleoplasm. The protein localises to the endosome. The protein resides in the cytoplasmic vesicle. It is found in the secretory vesicle. Its subcellular location is the synaptic vesicle. It localises to the postsynaptic density. The protein localises to the perikaryon. The protein resides in the cell projection. It is found in the neuron projection. It carries out the reaction S-ubiquitinyl-[E2 ubiquitin-conjugating enzyme]-L-cysteine + [acceptor protein]-L-lysine = [E2 ubiquitin-conjugating enzyme]-L-cysteine + N(6)-ubiquitinyl-[acceptor protein]-L-lysine.. It functions in the pathway protein modification; protein ubiquitination. Functionally, E3 ubiquitin-protein ligase that plays an important role in neuronal differentiation, including neurogenesis and gliogenesis, during brain development. During embryonic development initiates neuronal differentiation by inducing cell cycle arrest at the G0/G1 phase through up-regulation of cell-cycle regulatory proteins. Plays a role not only in the fetal period during the development of the nervous system, but also in the adult brain, where it is involved in the maintenance of neural functions and protection of the nervous tissue cells from oxidative stress-induced damage. Exhibits GTPase and E3 ubiquitin-protein ligase activities. Regulates dendritic spine density and synaptic neurotransmission; its ability to hydrolyze GTP is involved in the maintenance of dendritic spine density. The protein is RING finger protein 112 (Rnf112) of Mus musculus (Mouse).